The following is a 503-amino-acid chain: MEEFQGYLELDRSRXHYLLYPLLFREYIYALAHDHGLNRSMLFENAXDDXKSSSIIVKRLITRMYQQNPLIFSAKDSIQNQFFGHNKNLYSQILSEGFAVIVEXPISLRFLFSLERKEIAKSYNLRSIHSIFSFLEDKFTHLDYVSDVLIPYHIHLEILXQTLRYWVKDASSLHLLRFFLHDYWNSFITPKKHITFFLKGNPRLFLFLYNSHICEYEYIFPFLRNQSSHLRSTSSGIFXERIYFYVKIEHFVKVFFDNNFQCILWFLKDPFMHYVRYQAKFXVASKDTPLLMNKWKCYLVNLWQYHFSVWFQPGRIDINQLCKYSIYFLGYRSSVRLNSSVVRSQMLENLXLINNAMKKFETIVPIIPLIGSLYKSNFCNTFGHPISQPTRTHSSDSDIIDRFLRICRNLSHYHSGSSKKKSLYRVKYILRLSCVKTLARKHKRTVRTFVKRLGSEFLEEFLTEEEVVLSLIFPRTYSTSRRLYRGQIWXLDITSINDLANYE.

Belongs to the intron maturase 2 family. MatK subfamily.

The protein resides in the plastid. The protein localises to the chloroplast. Functionally, usually encoded in the trnK tRNA gene intron. Probably assists in splicing its own and other chloroplast group II introns. This is Maturase K from Kunzea baxteri (Scarlet kunzea).